Consider the following 144-residue polypeptide: 3-dehydroquinate dehydratase (144 aa).

Catalysis depends on Tyr22, which acts as the Proton acceptor. Positions 71, 77, and 84 each coordinate substrate. Catalysis depends on His97, which acts as the Proton donor. Substrate is bound by residues 98–99 (IS) and Arg108.

It belongs to the type-II 3-dehydroquinase family. In terms of assembly, homododecamer.

The catalysed reaction is 3-dehydroquinate = 3-dehydroshikimate + H2O. Its pathway is metabolic intermediate biosynthesis; chorismate biosynthesis; chorismate from D-erythrose 4-phosphate and phosphoenolpyruvate: step 3/7. In terms of biological role, catalyzes a trans-dehydration via an enolate intermediate. The chain is 3-dehydroquinate dehydratase (aroQ) from Thermotoga maritima (strain ATCC 43589 / DSM 3109 / JCM 10099 / NBRC 100826 / MSB8).